Consider the following 484-residue polypeptide: Zinc metalloproteinase homolog-disintegrin albolatin (484 aa).

Residues 1-20 (MIQVLLVTICLAVFPYQGSS) form the signal peptide. The propeptide occupies 21–191 (IILESGNVND…KTSQLNLPLL (171 aa)). Asn80, Asn251, and Asn301 each carry an N-linked (GlcNAc...) asparagine glycan. One can recognise a Peptidase M12B domain in the interval 194 to 392 (RCIELVMVAD…WTSYCLYNEP (199 aa)). 10 disulfides stabilise this stretch: Cys305-Cys387, Cys345-Cys369, Cys347-Cys352, Cys403-Cys422, Cys414-Cys432, Cys416-Cys427, Cys426-Cys449, Cys440-Cys446, Cys445-Cys470, and Cys458-Cys477. In terms of domain architecture, Disintegrin spans 400–484 (PPVCGNYYLE…GDCPWIGYYG (85 aa)). The short motif at 462-464 (KGD) is the Cell attachment site; atypical (KGD) element.

This sequence belongs to the venom metalloproteinase (M12B) family. P-II subfamily. P-IIb sub-subfamily. In terms of assembly, homodimer; disulfide-linked (disintegrin). Expressed by the venom gland.

The protein localises to the secreted. The function of this complete protein has not been studied, but it may be similar to the function of the disintegrin domain. A recombinant protein of this domain (409-484) inhibits collagen-induced human platelet aggregation, without having effect on ADP-induced aggregation. It may act either by blocking the binding of fibrinogen to the platelet receptor GPIIb/GPIIIa (ITGA2B/ITGB3) or by blocking the binding of collagen to the integrin alpha-2/beta-1 complex (ITGA2/ITGB1). This chain is Zinc metalloproteinase homolog-disintegrin albolatin, found in Trimeresurus albolabris (White-lipped pit viper).